The following is a 172-amino-acid chain: Large ribosomal subunit protein uL10 (172 aa).

The protein belongs to the universal ribosomal protein uL10 family. In terms of assembly, part of the ribosomal stalk of the 50S ribosomal subunit. The N-terminus interacts with L11 and the large rRNA to form the base of the stalk. The C-terminus forms an elongated spine to which L12 dimers bind in a sequential fashion forming a multimeric L10(L12)X complex.

Forms part of the ribosomal stalk, playing a central role in the interaction of the ribosome with GTP-bound translation factors. This chain is Large ribosomal subunit protein uL10, found in Beijerinckia indica subsp. indica (strain ATCC 9039 / DSM 1715 / NCIMB 8712).